Reading from the N-terminus, the 341-residue chain is Probable long-chain-alcohol O-fatty-acyltransferase 1 (341 aa).

Transmembrane regions (helical) follow at residues 7–27, 36–56, 58–78, 120–140, 149–169, 233–253, 261–281, and 293–313; these read NLIEVWISALISLSYCYYISS, LLSILPVCILFLVLPLFLSCV, FCAISVLFLSWLANFKLLLFA, PMPKWVLAVKILVLGVLLHVY, FVVLALYCLHIYLEVELVLVF, MFAGVMASFFVSGLMHELLYF, TWEVTCFFVLHGAATATEIAV, and AVSGLVVLTFVSVTGVWLFLA.

It belongs to the wax synthase family.

The protein resides in the membrane. The catalysed reaction is a long chain fatty alcohol + a fatty acyl-CoA = a wax ester + CoA. Functionally, catalyzes the final step in the synthesis of long-chain linear esters (waxes). The sequence is that of Probable long-chain-alcohol O-fatty-acyltransferase 1 (AT1) from Arabidopsis thaliana (Mouse-ear cress).